Consider the following 1935-residue polypeptide: Rho GTPase-activating protein 21 (1935 aa).

Residues 1–46 (MATRRATVPEQQQQQPSSPGSEISKNKDGQEQSEMVSPTEEEGFCW) form a disordered region. Residues 78–163 (HTTVKDEENG…TLELSVMPKD (86 aa)) form the PDZ domain. Disordered stretches follow at residues 212–237 (VEVP…TTQP), 339–373 (PPSY…PGSH), 413–456 (QNTT…QERL), 673–718 (TSTS…DSNS), and 862–919 (NSKT…DVFS). Composition is skewed to polar residues over residues 217 to 237 (SGTS…TTQP), 348 to 373 (SMFS…PGSH), and 413 to 429 (QNTT…SSGQ). Low complexity-rich tracts occupy residues 441-451 (PQSVQMRQRSV) and 673-685 (TSTS…PAHT). Positions 708–718 (SPEANAGDSNS) are enriched in polar residues. Basic and acidic residues predominate over residues 863-884 (SKTERSKSCDEGLDDYKDEGKL). Positions 920–1033 (DSNKEGFLYF…WIKAIQENGN (114 aa)) constitute a PH domain. A disordered region spans residues 1056–1126 (TMMSSSSNKS…KGSWRRIMKK (71 aa)). The segment covering 1059-1072 (SSSSNKSEQSPKPS) has biased composition (low complexity). Positions 1097-1119 (PKQESERRLFSKDDISPPKDKGS) are enriched in basic and acidic residues. Positions 1140-1332 (VRLDDCPPAH…TLIQQHDWFF (193 aa)) constitute a Rho-GAP domain. 7 disordered regions span residues 1341–1393 (ITAV…GSGK), 1411–1431 (RKRK…ELDN), 1488–1510 (SEAT…RLPP), 1525–1548 (SMSD…KPKV), 1637–1665 (HRSK…SITP), 1688–1733 (SIRQ…EPEE), and 1838–1925 (SELS…SGTQ). The span at 1345–1355 (QEESTVESQPV) shows a compositional bias: polar residues. Residues 1376 to 1393 (SDSASDSAKSKGSWGSGK) are compositionally biased toward low complexity. 2 stretches are compositionally biased toward polar residues: residues 1525 to 1543 (SMSD…SAQR) and 1646 to 1662 (RNVQ…TEGS). Basic and acidic residues predominate over residues 1691 to 1705 (QKTDSECSAESKNEE). Composition is skewed to polar residues over residues 1872–1889 (QVST…SQGT) and 1898–1911 (NGDS…NNFS).

The protein resides in the golgi apparatus membrane. The protein localises to the cell junction. It is found in the cytoplasmic vesicle membrane. It localises to the cytoplasm. Its subcellular location is the cytoskeleton. In terms of biological role, GTPase-activating protein (GAP) for rhoa and cdc42. The protein is Rho GTPase-activating protein 21 (arhgap21) of Xenopus tropicalis (Western clawed frog).